A 230-amino-acid polypeptide reads, in one-letter code: 2-C-methyl-D-erythritol 4-phosphate cytidylyltransferase (230 aa).

This sequence belongs to the IspD/TarI cytidylyltransferase family. IspD subfamily.

It carries out the reaction 2-C-methyl-D-erythritol 4-phosphate + CTP + H(+) = 4-CDP-2-C-methyl-D-erythritol + diphosphate. It participates in isoprenoid biosynthesis; isopentenyl diphosphate biosynthesis via DXP pathway; isopentenyl diphosphate from 1-deoxy-D-xylulose 5-phosphate: step 2/6. Functionally, catalyzes the formation of 4-diphosphocytidyl-2-C-methyl-D-erythritol from CTP and 2-C-methyl-D-erythritol 4-phosphate (MEP). The protein is 2-C-methyl-D-erythritol 4-phosphate cytidylyltransferase of Laribacter hongkongensis (strain HLHK9).